Reading from the N-terminus, the 389-residue chain is Putative zinc finger CCCH domain-containing protein 10 (389 aa).

The span at 1 to 11 shows a compositional bias: polar residues; the sequence is MANVSFTFDSQ. The interval 1–110 is disordered; sequence MANVSFTFDS…QDRRGSESRM (110 aa). Basic and acidic residues-rich tracts occupy residues 12–52 and 86–110; these read EQNK…RVSE and RSHETESRLWQRARTQDRRGSESRM. 2 C3H1-type zinc fingers span residues 131 to 157 and 158 to 190; these read RPGEDNCLFYMKNHLCEWGSECCYNHP and PLQEIPCRIGKKLDCKAGACKRGSNCPFNHPKE. Residues 183-296 form a disordered region; sequence CPFNHPKERD…ATATGKVSGK (114 aa). Composition is skewed to basic and acidic residues over residues 204–243 and 251–284; these read PDLRRNDSGRRYNTESRSWPENKEKEVGQFRDHQDSKEDA and RPRDVEMRKRSRSPDFRAKTETKEHREAEERSSR.

This chain is Putative zinc finger CCCH domain-containing protein 10, found in Arabidopsis thaliana (Mouse-ear cress).